The following is a 302-amino-acid chain: Homoserine O-acetyltransferase (302 aa).

Catalysis depends on cysteine 142, which acts as the Acyl-thioester intermediate. 2 residues coordinate substrate: lysine 163 and serine 192. Histidine 235 acts as the Proton acceptor in catalysis. Glutamate 237 is a catalytic residue. Arginine 249 is a binding site for substrate.

This sequence belongs to the MetA family.

It localises to the cytoplasm. The catalysed reaction is L-homoserine + acetyl-CoA = O-acetyl-L-homoserine + CoA. It functions in the pathway amino-acid biosynthesis; L-methionine biosynthesis via de novo pathway; O-acetyl-L-homoserine from L-homoserine: step 1/1. Transfers an acetyl group from acetyl-CoA to L-homoserine, forming acetyl-L-homoserine. This chain is Homoserine O-acetyltransferase, found in Geobacillus sp. (strain WCH70).